Reading from the N-terminus, the 662-residue chain is Bifunctional polymyxin resistance protein ArnA (662 aa).

Residues 1 to 307 (MTSKAVVFAY…ELGLVEGARL (307 aa)) are formyltransferase ArnAFT. The active-site Proton donor; for formyltransferase activity is the His106. (6R)-10-formyltetrahydrofolate-binding positions include Arg116 and 138–142 (VERAD). The interval 316–662 (RRTRVLILGV…EALREREAQA (347 aa)) is dehydrogenase ArnADH. Residues Asp349 and 370–371 (DI) contribute to the NAD(+) site. Residues Ala395, Tyr400, and 434–435 (TS) each bind UDP-alpha-D-glucuronate. The active-site Proton acceptor; for decarboxylase activity is the Glu436. Residues Arg462, Asn493, 527-536 (RLVDGGAQKR), and Tyr614 contribute to the UDP-alpha-D-glucuronate site. Arg620 serves as the catalytic Proton donor; for decarboxylase activity.

In the N-terminal section; belongs to the Fmt family. UDP-L-Ara4N formyltransferase subfamily. The protein in the C-terminal section; belongs to the NAD(P)-dependent epimerase/dehydratase family. UDP-glucuronic acid decarboxylase subfamily. Homohexamer, formed by a dimer of trimers.

It catalyses the reaction UDP-alpha-D-glucuronate + NAD(+) = UDP-beta-L-threo-pentopyranos-4-ulose + CO2 + NADH. The enzyme catalyses UDP-4-amino-4-deoxy-beta-L-arabinose + (6R)-10-formyltetrahydrofolate = UDP-4-deoxy-4-formamido-beta-L-arabinose + (6S)-5,6,7,8-tetrahydrofolate + H(+). The protein operates within nucleotide-sugar biosynthesis; UDP-4-deoxy-4-formamido-beta-L-arabinose biosynthesis; UDP-4-deoxy-4-formamido-beta-L-arabinose from UDP-alpha-D-glucuronate: step 1/3. It functions in the pathway nucleotide-sugar biosynthesis; UDP-4-deoxy-4-formamido-beta-L-arabinose biosynthesis; UDP-4-deoxy-4-formamido-beta-L-arabinose from UDP-alpha-D-glucuronate: step 3/3. Its pathway is bacterial outer membrane biogenesis; lipopolysaccharide biosynthesis. In terms of biological role, bifunctional enzyme that catalyzes the oxidative decarboxylation of UDP-glucuronic acid (UDP-GlcUA) to UDP-4-keto-arabinose (UDP-Ara4O) and the addition of a formyl group to UDP-4-amino-4-deoxy-L-arabinose (UDP-L-Ara4N) to form UDP-L-4-formamido-arabinose (UDP-L-Ara4FN). The modified arabinose is attached to lipid A and is required for resistance to polymyxin and cationic antimicrobial peptides. This chain is Bifunctional polymyxin resistance protein ArnA, found in Pseudomonas paraeruginosa (strain DSM 24068 / PA7) (Pseudomonas aeruginosa (strain PA7)).